The sequence spans 360 residues: Histidinol-phosphate aminotransferase (360 aa).

Lys-211 is modified (N6-(pyridoxal phosphate)lysine).

Belongs to the class-II pyridoxal-phosphate-dependent aminotransferase family. Histidinol-phosphate aminotransferase subfamily. In terms of assembly, homodimer. It depends on pyridoxal 5'-phosphate as a cofactor.

The catalysed reaction is L-histidinol phosphate + 2-oxoglutarate = 3-(imidazol-4-yl)-2-oxopropyl phosphate + L-glutamate. It participates in amino-acid biosynthesis; L-histidine biosynthesis; L-histidine from 5-phospho-alpha-D-ribose 1-diphosphate: step 7/9. The chain is Histidinol-phosphate aminotransferase from Sodalis glossinidius (strain morsitans).